We begin with the raw amino-acid sequence, 183 residues long: Translation initiation factor IF-3 (183 aa).

This sequence belongs to the IF-3 family. Monomer.

It localises to the cytoplasm. Functionally, IF-3 binds to the 30S ribosomal subunit and shifts the equilibrium between 70S ribosomes and their 50S and 30S subunits in favor of the free subunits, thus enhancing the availability of 30S subunits on which protein synthesis initiation begins. This chain is Translation initiation factor IF-3, found in Vibrio cholerae serotype O1 (strain ATCC 39315 / El Tor Inaba N16961).